The chain runs to 307 residues: tRNA dimethylallyltransferase (307 aa).

Residue 9 to 16 (GATGTGKS) coordinates ATP. A substrate-binding site is contributed by 11–16 (TGTGKS).

Belongs to the IPP transferase family. Monomer. It depends on Mg(2+) as a cofactor.

It catalyses the reaction adenosine(37) in tRNA + dimethylallyl diphosphate = N(6)-dimethylallyladenosine(37) in tRNA + diphosphate. Catalyzes the transfer of a dimethylallyl group onto the adenine at position 37 in tRNAs that read codons beginning with uridine, leading to the formation of N6-(dimethylallyl)adenosine (i(6)A). The chain is tRNA dimethylallyltransferase from Clavibacter sepedonicus (Clavibacter michiganensis subsp. sepedonicus).